The sequence spans 218 residues: Large ribosomal subunit protein uL3 (218 aa).

Belongs to the universal ribosomal protein uL3 family. As to quaternary structure, part of the 50S ribosomal subunit. Forms a cluster with proteins L14 and L19.

One of the primary rRNA binding proteins, it binds directly near the 3'-end of the 23S rRNA, where it nucleates assembly of the 50S subunit. This chain is Large ribosomal subunit protein uL3, found in Corynebacterium aurimucosum (strain ATCC 700975 / DSM 44827 / CIP 107346 / CN-1) (Corynebacterium nigricans).